Consider the following 324-residue polypeptide: Protoheme IX farnesyltransferase (324 aa).

Transmembrane regions (helical) follow at residues 31–51, 53–73, 104–124, 125–145, 153–173, 181–201, 222–242, 243–263, and 285–305; these read LIVL…RGEV, PVLA…ANTI, LVFA…CANL, LSAC…THWL, IVIG…AVTG, VLFA…AMLI, TAWQ…LLVY, PLHA…VVFI, and FSIL…LPLT.

This sequence belongs to the UbiA prenyltransferase family. Protoheme IX farnesyltransferase subfamily.

It localises to the cell inner membrane. The catalysed reaction is heme b + (2E,6E)-farnesyl diphosphate + H2O = Fe(II)-heme o + diphosphate. It functions in the pathway porphyrin-containing compound metabolism; heme O biosynthesis; heme O from protoheme: step 1/1. Converts heme B (protoheme IX) to heme O by substitution of the vinyl group on carbon 2 of heme B porphyrin ring with a hydroxyethyl farnesyl side group. The polypeptide is Protoheme IX farnesyltransferase (Cyanothece sp. (strain PCC 7425 / ATCC 29141)).